We begin with the raw amino-acid sequence, 335 residues long: tRNA (guanine(6)-N2)-methyltransferase (335 aa).

One can recognise a THUMP domain in the interval Glu47–Leu150. Residues Ser195 to Thr197, Asp243 to Ala244, and Asn260 contribute to the S-adenosyl-L-methionine site.

Belongs to the methyltransferase superfamily. In terms of assembly, monomer in solution.

The protein resides in the cytoplasm. The enzyme catalyses guanosine(6) in tRNA + S-adenosyl-L-methionine = N(2)-methylguanosine(6) in tRNA + S-adenosyl-L-homocysteine + H(+). In terms of biological role, S-adenosyl-L-methionine-dependent methyltransferase that catalyzes the methylation of the guanosine nucleotide at position 6 (m2G6) in tRNA(Phe). This chain is tRNA (guanine(6)-N2)-methyltransferase, found in Thermus thermophilus (strain ATCC BAA-163 / DSM 7039 / HB27).